A 652-amino-acid polypeptide reads, in one-letter code: DNA ligase (652 aa).

NAD(+) contacts are provided by residues 29–33 (DSEYD), 78–79 (SL), and Glu-107. Lys-109 (N6-AMP-lysine intermediate) is an active-site residue. Arg-130, Glu-164, Lys-278, and Lys-302 together coordinate NAD(+). Zn(2+) contacts are provided by Cys-395, Cys-398, Cys-413, and Cys-418. Residues 577 to 652 (VADAALSGLT…VRDEAWLESL (76 aa)) form the BRCT domain.

Belongs to the NAD-dependent DNA ligase family. LigA subfamily. The cofactor is Mg(2+). Mn(2+) serves as cofactor.

It carries out the reaction NAD(+) + (deoxyribonucleotide)n-3'-hydroxyl + 5'-phospho-(deoxyribonucleotide)m = (deoxyribonucleotide)n+m + AMP + beta-nicotinamide D-nucleotide.. In terms of biological role, DNA ligase that catalyzes the formation of phosphodiester linkages between 5'-phosphoryl and 3'-hydroxyl groups in double-stranded DNA using NAD as a coenzyme and as the energy source for the reaction. It is essential for DNA replication and repair of damaged DNA. The chain is DNA ligase from Streptococcus pneumoniae (strain 70585).